The primary structure comprises 750 residues: Methylmalonyl-CoA mutase, mitochondrial (750 aa).

The transit peptide at 1-32 (MLRAKNQLFLLSPHYLRQVKESSGSRLIQQRL) directs the protein to the mitochondrion. Gln50 is a malonyl-CoA binding site. Position 89 is an N6-acetyllysine (Lys89). Malonyl-CoA contacts are provided by residues 96–99 (YPTM) and 106–110 (TIRQY). Residue Lys212 is modified to N6-acetyllysine. Malonyl-CoA-binding positions include 216 to 218 (TIQ), Arg228, Lys255, His265, and 304 to 306 (RLS). Position 335 is an N6-acetyllysine (Lys335). At Lys343 the chain carries N6-succinyllysine. At Ser481 the chain carries Phosphoserine. Lys595 is subject to N6-succinyllysine. An N6-acetyllysine modification is found at Lys602. Residues 614–746 (RPRLLVAKMG…DDIEKCLEKK (133 aa)) form the B12-binding domain. His627 is an adenosylcob(III)alamin binding site.

The protein belongs to the methylmalonyl-CoA mutase family. As to quaternary structure, homodimer. Interacts (the apoenzyme form) with MMAA; the interaction is GTP dependent. Requires adenosylcob(III)alamin as cofactor.

The protein resides in the mitochondrion matrix. Its subcellular location is the mitochondrion. It localises to the cytoplasm. The enzyme catalyses (R)-methylmalonyl-CoA = succinyl-CoA. Inhibited by itaconyl-CoA, a metabolite that inactivates the coenzyme B12 cofactor. In terms of biological role, catalyzes the reversible isomerization of methylmalonyl-CoA (MMCoA) (generated from branched-chain amino acid metabolism and degradation of dietary odd chain fatty acids and cholesterol) to succinyl-CoA (3-carboxypropionyl-CoA), a key intermediate of the tricarboxylic acid cycle. The protein is Methylmalonyl-CoA mutase, mitochondrial (MMUT) of Bos taurus (Bovine).